A 392-amino-acid chain; its full sequence is Elongation factor Tu 2 (392 aa).

The tr-type G domain occupies 10–201; the sequence is KPHVNIGTIG…AVDSYIPTPE (192 aa). Residues 19 to 26 are G1; the sequence is GHVDHGKT. Position 19–26 (19–26) interacts with GTP; that stretch reads GHVDHGKT. Thr-26 lines the Mg(2+) pocket. Residues 55–59 form a G2 region; that stretch reads GITIS. The G3 stretch occupies residues 76–79; the sequence is DCPG. Residues 76–80 and 131–134 each bind GTP; these read DCPGH and NKVD. A G4 region spans residues 131–134; it reads NKVD. Positions 169-171 are G5; the sequence is SAL.

The protein belongs to the TRAFAC class translation factor GTPase superfamily. Classic translation factor GTPase family. EF-Tu/EF-1A subfamily. In terms of assembly, monomer.

It is found in the cytoplasm. The catalysed reaction is GTP + H2O = GDP + phosphate + H(+). Its function is as follows. GTP hydrolase that promotes the GTP-dependent binding of aminoacyl-tRNA to the A-site of ribosomes during protein biosynthesis. In Rhizobium etli (strain ATCC 51251 / DSM 11541 / JCM 21823 / NBRC 15573 / CFN 42), this protein is Elongation factor Tu 2.